Reading from the N-terminus, the 430-residue chain is Adenylosuccinate synthetase (430 aa).

Residues 12–18 (GDEGKGK) and 40–42 (GHT) each bind GTP. Aspartate 13 acts as the Proton acceptor in catalysis. Residues aspartate 13 and glycine 40 each contribute to the Mg(2+) site. Residues 13 to 16 (DEGK), 38 to 41 (NAGH), threonine 130, arginine 144, glutamine 224, threonine 239, and arginine 303 each bind IMP. Histidine 41 acts as the Proton donor in catalysis. 299–305 (ATTGRPR) contacts substrate. Residues arginine 305, 331 to 333 (KLD), and 413 to 415 (SVG) each bind GTP.

This sequence belongs to the adenylosuccinate synthetase family. In terms of assembly, homodimer. The cofactor is Mg(2+).

The protein resides in the cytoplasm. It catalyses the reaction IMP + L-aspartate + GTP = N(6)-(1,2-dicarboxyethyl)-AMP + GDP + phosphate + 2 H(+). The protein operates within purine metabolism; AMP biosynthesis via de novo pathway; AMP from IMP: step 1/2. Its function is as follows. Plays an important role in the de novo pathway of purine nucleotide biosynthesis. Catalyzes the first committed step in the biosynthesis of AMP from IMP. In Trichlorobacter lovleyi (strain ATCC BAA-1151 / DSM 17278 / SZ) (Geobacter lovleyi), this protein is Adenylosuccinate synthetase.